The chain runs to 662 residues: Hypoxia-inducible factor 3-alpha (662 aa).

Residues 1–25 (MDWDQDRSSTELRKEKSRDAARSRR) form a disordered region. One can recognise a bHLH domain in the interval 12-65 (LRKEKSRDAARSRRSQETEVLYQLAHTLPFARGVSAHLDKASIMRLTISYLRMH). The interval 75 to 98 (QVRKEGEPLDACYLKALEGFVMVL) is nuclear localization signal. PAS domains are found at residues 80-150 (GEPL…PSLS) and 225-295 (PHPA…LSKG). Residues 228 to 272 (ASLEPPLGRGAFLSRHSLDMKFTYCDERIAEVAGYSPDDLIGCSA) are nuclear export signal. The tract at residues 352-379 (EQTEQHTRRPPQLGTSSKKGIPGNSLDP) is disordered. Positions 410 to 413 (LRRL) match the LRRLL motif. 2 disordered regions span residues 417-445 (ILDG…ADLP) and 459-480 (STAR…PDTP). A compositionally biased stretch (low complexity) spans 421–433 (PPTAATPSTPQAA). The ODD stretch occupies residues 448 to 581 (LAVGLENAHR…SEDKGLELLE (134 aa)). The segment at 450–501 (VGLENAHRLSTARKNKTMETDLDIAQDPDTPDLEMLAPYISMDDDFQLNSSE) is NTAD. A Glycyl lysine isopeptide (Lys-Gly) (interchain with G-Cter in ubiquitin) cross-link involves residue lysine 463. Residues 469–480 (TDLDIAQDPDTP) show a composition bias toward acidic residues. The LAPYISMD signature appears at 485–492 (LAPYISMD). Proline 487 carries the 4-hydroxyproline modification. Positions 500–595 (SEQLPKVHRR…KRSPRLEPGS (96 aa)) are disordered. The span at 505-521 (KVHRRPPRTARRPRARS) shows a compositional bias: basic residues. Residue lysine 565 forms a Glycyl lysine isopeptide (Lys-Gly) (interchain with G-Cter in ubiquitin) linkage. Basic and acidic residues predominate over residues 572–584 (SEDKGLELLETKP).

Interacts with ARNT, BAD, BCL2L2, EPAS1, HIF1A, MCL1 and VHL. In terms of processing, in normoxia, hydroxylated on Pro-487 in the oxygen-dependent degradation domain (ODD) by PHD. The hydroxylated proline promotes interaction with VHL, initiating rapid ubiquitination and subsequent proteasomal degradation. Post-translationally, ubiquitinated; ubiquitination occurs in a VHL- and oxygen-dependent pathway and subsequently targeted for proteasomal degradation. Expressed in the perivenous zone of the liver. Expressed in all tissues examined during normoxia. Expressed in brain and lung. Expressed in periportal and perivenous hepatocytes and in endothelial cells of the central vein (at protein level). Highest expression seen in the cerebral cortex, hippocampus, and lung. Low expression in myocardial tissue and liver.

The protein localises to the nucleus. Its subcellular location is the cytoplasm. The protein resides in the nucleus speckle. It localises to the mitochondrion. Its function is as follows. Acts as a transcriptional regulator in adaptive response to low oxygen tension. Attenuates the ability of transcription factor HIF1A, EPAS1 and the HIF1A-ARNT complex to bind to hypoxia-responsive elements (HRE) located within the enhancer/promoter of hypoxia-inducible target genes and hence inhibits HRE-driven transcriptional activation. Functions as an inhibitor of angiogenesis in hypoxic cells of the cornea. Plays a role in the development of the cardiorespiratory system. May also be involved in apoptosis. May act as a tumor suppressor. The protein is Hypoxia-inducible factor 3-alpha of Rattus norvegicus (Rat).